Here is a 329-residue protein sequence, read N- to C-terminus: Trem-like transcript 2 protein (329 aa).

A signal peptide spans 1–24 (MEPWPLTFLLLLLLLLWLQGCVSG). The Ig-like V-type domain maps to 25–126 (HSNENLYRKV…HFYPLVGFQL (102 aa)). Over 25–270 (HSNENLYRKV…NRSQETYIPA (246 aa)) the chain is Extracellular. Intrachain disulfides connect C46-C110 and C61-C68. A disordered region spans residues 202 to 259 (FIDTSGTVTEPERNTESQPATLSPSNARSFSADPVTTSTMSRHQSSSLSTTGTCHPLT). Residues 217–259 (ESQPATLSPSNARSFSADPVTTSTMSRHQSSSLSTTGTCHPLT) show a composition bias toward polar residues. N261 carries an N-linked (GlcNAc...) asparagine glycan. The chain crosses the membrane as a helical span at residues 271-291 (MVVVLTFLPAPVVLVVAYGFW). Over 292-329 (KKRHMGRYNLGSNYAKPWIHLPEGPETPWKPAWSKITQ) the chain is Cytoplasmic.

In terms of assembly, interacts with CD276 and this interaction enhances T-cell activation. In terms of tissue distribution, detected in B-lymphocytes and macrophages. Detected in spleen, lymph nodes, blood, bone marrow and cells from the peritoneal cavity (at protein level).

Its subcellular location is the cell membrane. Its function is as follows. Cell surface receptor that may play a role in the innate and adaptive immune response. Acts as a counter-receptor for CD276 and interaction with CD276 on T-cells enhances T-cell activation. In Mus musculus (Mouse), this protein is Trem-like transcript 2 protein (Treml2).